The chain runs to 867 residues: MEIENTRDSDSMRGSRVGFSGSLVSGKKSARFKDDESYVEITLDVRDDSVSVQNIKGADHEAALLASRLEKRPNNTLGSQLSFHLRQVSKELKRMTSSNKFQKIDRSKSGAARALRGLQFMNKNVGTEGWSEVESRFDQLAVNGMLTKSLFGQCIGMKESSEFAEELFDALARKRCITSPAVTKDELREFWEQITDTSFDARLQTFFDMVDKDADGRITQEEVKEIISLSASANKLSKIQDNSDEYAALIMEELDPGNVGYIELYNLETLLLQAPSHSMNLSTNSRVLSRMLSQKLKPTKERNPFKRCKRRLDYFIEDNWKRIWVMALWLSICAGLFTWKFIQYKRRAVFDVMGYCVSVAKGGAETTKFNMALVLLPVCRNTITWLRSRTKLGKIIPFDDNINFHKVIAFGIAVGVGLHAISHLTCDFPRLLHATDEEYEPMKPFFGDERPNNYWWFVKGTEGWTGVVMVVLMIIAYVLAQPWFRRNRLNLPSTIKKLTGFNAFWYSHHLFVIVYVLFIIHGYFLYLSKKWYKKTTWMYIAVPMILYACERLLRAFRSGYKAVKILKVAVYPGNVMAVHMSKPQGFKYTSGQYIFVNCSDVSSFQWHPFTISSAPGDDYLSMHIRTLGDWTSQLKTLFSKVCEPPTGDQSGLLRADVAKADYKPRLPKLLIDGPYGAPAQDYKKYDVVLLVGLGIGATPLISIVKDVLNNIKQQKNIEDGTKGSKRSPFATKRAYFYWVTREQGSFEWFKGVMDEVSENDQEGLIELHNYCTSVYEEGDARSALITMLQSIQQAKSGVDIVSGTRVKTHFARPNWRQVFKRVTINHPDQRIGVFYCGPQGLVGELRHLSQDFSHKTGTKFEFHKENF.

Residues 1 to 13 (MEIENTRDSDSMR) are compositionally biased toward basic and acidic residues. Residues 1–20 (MEIENTRDSDSMRGSRVGFS) form a disordered region. At 1 to 322 (MEIENTRDSD…DYFIEDNWKR (322 aa)) the chain is on the cytoplasmic side. Residues Ser82 and Ser97 each carry the phosphoserine; by CPK modification. EF-hand-like regions lie at residues 141 to 149 (AVNGMLTKS) and 175 to 186 (RCITSPAVTKDE). EF-hand domains lie at 198–233 (SFDA…SASA) and 242–277 (NSDE…APSH). Residues Asp211, Asp213, Asp215, Arg217, and Glu222 each coordinate Ca(2+). A helical transmembrane segment spans residues 323 to 343 (IWVMALWLSICAGLFTWKFIQ). At 344–358 (YKRRAVFDVMGYCVS) the chain is on the extracellular side. Residues 359-379 (VAKGGAETTKFNMALVLLPVC) traverse the membrane as a helical segment. Residues 361 to 519 (KGGAETTKFN…LFVIVYVLFI (159 aa)) enclose the Ferric oxidoreductase domain. Residues 380–407 (RNTITWLRSRTKLGKIIPFDDNINFHKV) are Cytoplasmic-facing. A helical transmembrane segment spans residues 408-428 (IAFGIAVGVGLHAISHLTCDF). Over 429–463 (PRLLHATDEEYEPMKPFFGDERPNNYWWFVKGTEG) the chain is Extracellular. A helical membrane pass occupies residues 464–484 (WTGVVMVVLMIIAYVLAQPWF). Over 485 to 506 (RRNRLNLPSTIKKLTGFNAFWY) the chain is Cytoplasmic. A helical transmembrane segment spans residues 507-527 (SHHLFVIVYVLFIIHGYFLYL). The Extracellular portion of the chain corresponds to 528–686 (SKKWYKKTTW…APAQDYKKYD (159 aa)). Positions 558-681 (SGYKAVKILK…DGPYGAPAQD (124 aa)) constitute an FAD-binding FR-type domain. Residues 687-707 (VVLLVGLGIGATPLISIVKDV) traverse the membrane as a helical segment. Residues 708-867 (LNNIKQQKNI…TKFEFHKENF (160 aa)) are Cytoplasmic-facing.

Belongs to the RBOH (TC 5.B.1.3) family. Monomer and homodimer. Phosphorylation at Ser-82 and Ser-97 is required for full activity of RBOHB. Not phosphorylated at Ser-89. Phosphorylation at Ser-82 is induced by fungal elicitor treatment.

The protein resides in the cell membrane. With respect to regulation, inhibited by diphenylene iodinium (DPI). Its function is as follows. Calcium-dependent NADPH oxidase that generates superoxide. Involved in the massive phase II oxidative burst induced by pathogen infection. The protein is Respiratory burst oxidase homolog protein B (RBOHB) of Solanum tuberosum (Potato).